The chain runs to 411 residues: Lissencephaly-1 homolog (411 aa).

Residues 7–39 (QREELNKAIADYLASNGFMEALESFKKETDMPG) form the LisH domain. The stretch at 54 to 80 (TSVIRLQKKVMDLEGRLAEAEKEYISG) forms a coiled coil. Basic and acidic residues predominate over residues 77-89 (YISGTPSREKRSP). A disordered region spans residues 77–96 (YISGTPSREKRSPTEWIPRP). WD repeat units follow at residues 104–145 (GHRA…RTIK), 146–187 (GHTD…RTMH), 188–227 (GHDH…CVRT), 230–269 (GHRD…CKLE), 272–334 (EHDH…ALFT), 337–376 (GHDN…CCKT), and 379–411 (AHSH…WECR).

The protein belongs to the WD repeat LIS1/nudF family.

The protein resides in the cytoplasm. It localises to the cytoskeleton. The protein localises to the microtubule organizing center. It is found in the centrosome. Its function is as follows. Positively regulates the activity of the minus-end directed microtubule motor protein dynein. May enhance dynein-mediated microtubule sliding by targeting dynein to the microtubule plus end. Required for several dynein- and microtubule-dependent processes. The sequence is that of Lissencephaly-1 homolog from Ixodes scapularis (Black-legged tick).